The chain runs to 314 residues: MYPRSRVVGPGLGTSSSSRDHAGAGQHGELDLQQNQRQNLEVAEPKGPKLERQGHGDQRSTGTYTLIAPNETRRQKIQRIAEQELADLERWKQQNKAKPVHLVPQRLGGSQSEAEVRQKQQLQQMRSKYQQKLKRDEAIRIRKDAEEAELQRMKAIQREKSNKLEKKKQLQEDIRRATLREHHQSKTAELLSRLDTDRTNRSACNIAPPAAQSSRWKLPVLLRDPSRAGSQAHKDSPQKEDNQKLQKTRDGHQKNKLLETKGQHQEEERAQIHQAEHWRVNNAFLDRLQGKSQPGGVEQSGGCWNMNSTDGWGI.

4 disordered regions span residues M1–T72, N200–P219, P225–E267, and S292–I314. A compositionally biased stretch (basic and acidic residues) spans A43 to Q58. The stretch at E71–R180 forms a coiled coil. Basic and acidic residues predominate over residues A232–E267. The span at N305 to I314 shows a compositional bias: polar residues.

Functionally, plays a role in M1 macrophage polarization and is required for the proper regulation of gene expression during M1 versus M2 macrophage differentiation. Might play a role in RELA/p65 and STAT1 phosphorylation and nuclear localization upon activation of macrophages. The sequence is that of Epithelial-stromal interaction protein 1 (Epsti1) from Rattus norvegicus (Rat).